Reading from the N-terminus, the 1082-residue chain is RE1-silencing transcription factor (1082 aa).

Residues 32–117 (DLHELSKAEL…SLELSAVEPQ (86 aa)) are interaction with SIN3A. An interaction with SIN3B region spans residues 43 to 57 (APQLIMLANVALTGE). The segment at 140–413 (PVAEDKCRSS…KSKHPTCPSK (274 aa)) is interaction with ZFP90. The C2H2-type 1 zinc finger occupies 154 to 176 (FRCKPCQYEAESEEQFVHHIRIH). Positions 196 to 207 (SGSSPAEEGEFS) are required for binding to the neuron-restrictive silencer element. C2H2-type zinc fingers lie at residues 211–235 (IRCD…HHLR), 243–265 (YKCI…LRNH), 271–293 (YTCS…VRTH), 299–321 (YKCE…MRTH), 327–350 (FKCD…RQVH), 356–378 (LNCP…VELH), and 384–407 (FNCP…KSKH). Disordered regions lie at residues 408–809 (PTCP…ELSL) and 831–1027 (SKLL…KAGL). Basic and acidic residues predominate over residues 440-475 (EKMENEQTKTKGDVSGKKNEKPVKAVGKDASKEKKP). Positions 477 to 497 (SSVSVVQVTTRTRKSAVAAET) are enriched in low complexity. Residues 581 to 597 (KGTKKTPPKTKTSKKGG) show a composition bias toward basic residues. Residues 630–640 (VTGSGSSQTEL) show a composition bias toward polar residues. Composition is skewed to pro residues over residues 684–713 (YPQP…PAPP) and 729–751 (KEPP…PPPM). Basic and acidic residues-rich tracts occupy residues 798 to 807 (LRKDRAEKEL) and 854 to 864 (NSREETPKDQE). Polar residues predominate over residues 900-909 (RVSSSEQNSA). The residue at position 950 (serine 950) is a Phosphoserine. The interaction with RCOR1 stretch occupies residues 985-1063 (EGIHSHDGSD…HLNRHLVNVY (79 aa)). The C2H2-type 9 zinc finger occupies 1036 to 1058 (FVCIFCDRSFRKEKDYSKHLNRH).

Isoform 1 and isoform 2 form heterodimers. Isoform 2: Forms homodimers and homooligomers; binds to the neuron-restrictive silencer element (NRSE) as monomer. Interacts with SIN3A, SIN3B and RCOR1. Interacts with CDYL. Interacts with EHMT1 and EHMT2 only in the presence of CDYL. Part of a complex containing at least CDYL, REST, WIZ, SETB1, EHMT1 and EHMT2. Interacts (via zinc-finger DNA-binding domain) with ZFP90 (via N- and C-termini); the interaction inhibits REST repressor activity. Interacts (via C2H2-type zinc finger 5) with PRICKLE1. Interacts with FBXW11 and BTRC. Interacts with USP7. O-glycosylated. Post-translationally, phosphorylated; phosphorylation is required for ubiquitination. In terms of processing, ubiquitinated; ubiquitination is mediated by BTRC and leads to proteasomal degradation in G2 phase. Ubiquitination increases during neuronal differentiation. Deubiquitinated by USP7; leading to its stabilization and promoting the maintenance of neural progenitor cells. In terms of tissue distribution, expressed in the hippocampus, including quiescent neuronal progenitor (QNP) cells, transient-amplifying progenitor (TAP) cells, neuroblasts and mature neurons (at protein level). Expressed in embryonic stem cells (at protein level). Expressed in many non-neuronal tissues including the heart and liver. Abundantly expressed in osteoblastic lineage cells. Expressed in the spleen, kidney, blood cells, cortex, neocortex and in the utricle, saccule and organ of Corti of the inner ear. Isoform 2: Expressed in the cortex, neocortex and in the utricle, saccule and organ of Corti of the inner ear.

The protein resides in the nucleus. Its subcellular location is the cytoplasm. Transcriptional repressor which binds neuron-restrictive silencer element (NRSE) and represses neuronal gene transcription in non-neuronal cells. Restricts the expression of neuronal genes by associating with two distinct corepressors, SIN3A and RCOR1, which in turn recruit histone deacetylase to the promoters of REST-regulated genes. Mediates repression by recruiting the BHC complex at RE1/NRSE sites which acts by deacetylating and demethylating specific sites on histones, thereby acting as a chromatin modifier. Transcriptional repression by REST-CDYL via the recruitment of histone methyltransferase EHMT2 may be important in transformation suppression. Represses the expression of SRRM4 in non-neural cells to prevent the activation of neural-specific splicing events and to prevent production of REST isoform 2. Repressor activity may be inhibited by forming heterodimers with isoform 2, thereby preventing binding to NRSE or binding to corepressors and leading to derepression of target genes. Also maintains repression of neuronal genes in neural stem cells, and allows transcription and differentiation into neurons by dissociation from RE1/NRSE sites of target genes. Thereby is involved in maintaining the quiescent state of adult neural stem cells and preventing premature differentiation into mature neurons. Plays a role in the developmental switch in synaptic NMDA receptor composition during postnatal development, by repressing GRIN2B expression and thereby altering NMDA receptor properties from containing primarily GRIN2B to primarily GRIN2A subunits. Acts as a regulator of osteoblast differentiation. Key repressor of gene expression in hypoxia; represses genes in hypoxia by direct binding to an RE1/NRSE site on their promoter regions. May also function in stress resistance in the brain during aging; possibly by regulating expression of genes involved in cell death and in the stress response. Repressor of gene expression in the hippocampus after ischemia by directly binding to RE1/NRSE sites and recruiting SIN3A and RCOR1 to promoters of target genes, thereby promoting changes in chromatin modifications and ischemia-induced cell death. After ischemia, might play a role in repression of miR-132 expression in hippocampal neurons, thereby leading to neuronal cell death. Its function is as follows. Binds to the 3' region of the neuron-restrictive silencer element (NRSE), with lower affinity than isoform 1. Exhibits weaker repressor activity compared to isoform 1. May negatively regulate the repressor activity of isoform 1 by binding to isoform 1, thereby preventing its binding to NRSE and leading to derepression of target genes. However, in another study, does not appear to be implicated in repressor activity of a NRSE motif-containing reporter construct nor in inhibitory activity on the isoform 1 transcriptional repressor activity. Post-transcriptional inactivation of REST by SRRM4-dependent alternative splicing into isoform 2 is required in mechanosensory hair cells in the inner ear for derepression of neuronal genes, maintenance of hair cells and hearing. This chain is RE1-silencing transcription factor (Rest), found in Mus musculus (Mouse).